Consider the following 403-residue polypeptide: Nodal homolog (403 aa).

Positions 1 to 18 (MAFLTAVLCFGFACMVQG) are cleaved as a signal peptide. Positions 19–278 (VPSWLESRIP…RMPGIRRHRR (260 aa)) are excised as a propeptide. N-linked (GlcNAc...) asparagine glycans are attached at residues Asn-68, Asn-133, and Asn-169. The disordered stretch occupies residues 195-220 (AERGSGMSSAEFLDSPGDSPQYNPHH). Cystine bridges form between Cys-303–Cys-369, Cys-332–Cys-400, and Cys-336–Cys-402. Asn-341 carries an N-linked (GlcNAc...) asparagine glycan.

Belongs to the TGF-beta family. Homodimer; disulfide-linked. Interacts with, and is inhibited by cer1 and gdf10/bmp3b.

Its subcellular location is the secreted. Functionally, cooperation and regulatory loops of multiple nodals are essential for mesendoderm patterning in early embryos. Essential for mesoderm formation and axial patterning during embryonic development. Activates the activin-like signaling pathway to induce dorsal and ventral mesoderm in animal cap ectoderm. In addition, also dorsalizes ventral marginal zone (VMZ) tissues during gastrulation. Acts in a downstream signaling cascade via cripto and cer1 to mediate cardiogenesis in embryonic mesoderm. Directs the orientation of the left-right axis by driving the left-specific gene cascade in the left lateral plate mesoderm. The polypeptide is Nodal homolog (Xenopus tropicalis (Western clawed frog)).